Consider the following 273-residue polypeptide: Urease accessory protein UreD (273 aa).

Belongs to the UreD family. As to quaternary structure, ureD, UreF and UreG form a complex that acts as a GTP-hydrolysis-dependent molecular chaperone, activating the urease apoprotein by helping to assemble the nickel containing metallocenter of UreC. The UreE protein probably delivers the nickel.

The protein localises to the cytoplasm. Functionally, required for maturation of urease via the functional incorporation of the urease nickel metallocenter. The sequence is that of Urease accessory protein UreD from Rhizobium johnstonii (strain DSM 114642 / LMG 32736 / 3841) (Rhizobium leguminosarum bv. viciae).